The primary structure comprises 182 residues: Large ribosomal subunit protein uL10 (182 aa).

Belongs to the universal ribosomal protein uL10 family. Part of the ribosomal stalk of the 50S ribosomal subunit. The N-terminus interacts with L11 and the large rRNA to form the base of the stalk. The C-terminus forms an elongated spine to which L12 dimers bind in a sequential fashion forming a multimeric L10(L12)X complex.

In terms of biological role, forms part of the ribosomal stalk, playing a central role in the interaction of the ribosome with GTP-bound translation factors. The polypeptide is Large ribosomal subunit protein uL10 (Koribacter versatilis (strain Ellin345)).